The chain runs to 329 residues: Glutamyl-tRNA reductase (329 aa).

Substrate contacts are provided by residues 51 to 54 (TCLR), Ser99, 104 to 106 (EDQ), and Gln110. Catalysis depends on Cys52, which acts as the Nucleophile. 179–184 (GIGELA) contributes to the NADP(+) binding site.

This sequence belongs to the glutamyl-tRNA reductase family. In terms of assembly, homodimer.

The catalysed reaction is (S)-4-amino-5-oxopentanoate + tRNA(Glu) + NADP(+) = L-glutamyl-tRNA(Glu) + NADPH + H(+). It participates in porphyrin-containing compound metabolism; protoporphyrin-IX biosynthesis; 5-aminolevulinate from L-glutamyl-tRNA(Glu): step 1/2. Its function is as follows. Catalyzes the NADPH-dependent reduction of glutamyl-tRNA(Glu) to glutamate 1-semialdehyde (GSA). In Fusobacterium nucleatum subsp. nucleatum (strain ATCC 25586 / DSM 15643 / BCRC 10681 / CIP 101130 / JCM 8532 / KCTC 2640 / LMG 13131 / VPI 4355), this protein is Glutamyl-tRNA reductase.